Here is a 453-residue protein sequence, read N- to C-terminus: Putative F-box/FBD/LRR-repeat protein At1g66290 (453 aa).

Positions 1–28 are disordered; sequence MDEDGERRVRTKRSCSPESSDNGSGDEV. Residues 14–23 show a composition bias toward polar residues; it reads SCSPESSDNG. The region spanning 28–81 is the F-box domain; the sequence is VDWISDLPEALIVLVLLNLPTKDVIKTSVLSTKWRNIWRYVPRLDLDNRHFTEF. 5 LRR repeats span residues 155–179, 210–235, 246–269, 305–329, and 358–381; these read SLKL…VLVL, LDNV…SSKS, APKL…NLSS, LSRV…RCEP, and CSNL…IISE. The 51-residue stretch at 373-423 folds into the FBD domain; that stretch reads RKRTSIISEPRCLLSSLEYVKIEFALDKGKMELVRYLLENSPILKKLTLSL.

The sequence is that of Putative F-box/FBD/LRR-repeat protein At1g66290 from Arabidopsis thaliana (Mouse-ear cress).